The primary structure comprises 57 residues: Small ribosomal subunit protein bS21 (57 aa).

Residues 24–57 form a disordered region; that stretch reads SKSGTLQESRKREFYEKPSVKRKKKSEAARKRKF. A compositionally biased stretch (basic and acidic residues) spans 31 to 42; the sequence is ESRKREFYEKPS. The span at 43 to 57 shows a compositional bias: basic residues; it reads VKRKKKSEAARKRKF.

This sequence belongs to the bacterial ribosomal protein bS21 family.

The protein is Small ribosomal subunit protein bS21 (rpsU) of Listeria innocua serovar 6a (strain ATCC BAA-680 / CLIP 11262).